A 398-amino-acid chain; its full sequence is Dual-specificity RNA methyltransferase RlmN (398 aa).

The active-site Proton acceptor is Glu119. Residues Glu125–Asp364 form the Radical SAM core domain. A disulfide bond links Cys132 and Cys369. Positions 139, 143, and 146 each coordinate [4Fe-4S] cluster. S-adenosyl-L-methionine contacts are provided by residues Gly193–Glu194, Ser225, Ser247–His249, and Asn326. The active-site S-methylcysteine intermediate is Cys369.

This sequence belongs to the radical SAM superfamily. RlmN family. [4Fe-4S] cluster serves as cofactor.

Its subcellular location is the cytoplasm. The enzyme catalyses adenosine(2503) in 23S rRNA + 2 reduced [2Fe-2S]-[ferredoxin] + 2 S-adenosyl-L-methionine = 2-methyladenosine(2503) in 23S rRNA + 5'-deoxyadenosine + L-methionine + 2 oxidized [2Fe-2S]-[ferredoxin] + S-adenosyl-L-homocysteine. The catalysed reaction is adenosine(37) in tRNA + 2 reduced [2Fe-2S]-[ferredoxin] + 2 S-adenosyl-L-methionine = 2-methyladenosine(37) in tRNA + 5'-deoxyadenosine + L-methionine + 2 oxidized [2Fe-2S]-[ferredoxin] + S-adenosyl-L-homocysteine. Specifically methylates position 2 of adenine 2503 in 23S rRNA and position 2 of adenine 37 in tRNAs. m2A2503 modification seems to play a crucial role in the proofreading step occurring at the peptidyl transferase center and thus would serve to optimize ribosomal fidelity. The chain is Dual-specificity RNA methyltransferase RlmN from Yersinia pseudotuberculosis serotype O:3 (strain YPIII).